We begin with the raw amino-acid sequence, 318 residues long: Cytochrome f (318 aa).

Residues 1–34 (MKNNYLANLIKTLQAIVVSVALLAPLVLPSAVNA) form the signal peptide. 4 residues coordinate heme: Phe-35, Cys-55, Cys-58, and His-59. A helical membrane pass occupies residues 284–304 (VKGLIAFFFTVILAQILLVLK).

Belongs to the cytochrome f family. As to quaternary structure, the 4 large subunits of the cytochrome b6-f complex are cytochrome b6, subunit IV (17 kDa polypeptide, petD), cytochrome f and the Rieske protein, while the 4 small subunits are PetG, PetL, PetM and PetN. The complex functions as a dimer. Heme serves as cofactor.

The protein resides in the plastid. It is found in the chloroplast thylakoid membrane. Functionally, component of the cytochrome b6-f complex, which mediates electron transfer between photosystem II (PSII) and photosystem I (PSI), cyclic electron flow around PSI, and state transitions. In Rhodomonas salina (Cryptomonas salina), this protein is Cytochrome f.